Here is a 340-residue protein sequence, read N- to C-terminus: Olfactory receptor 5T3 (340 aa).

Topologically, residues 1–55 (MDSTFTGYNLYNLQVKTEMDKLSSGLDIYRNPLKNKTEVTMFILTGFTDDFELQV) are extracellular. A glycan (N-linked (GlcNAc...) asparagine) is linked at Asn35. Residues 56–76 (FLFLLFFAIYLFTLIGNLGLV) traverse the membrane as a helical segment. At 77-84 (VLVIEDSW) the chain is on the cytoplasmic side. A helical transmembrane segment spans residues 85–105 (LHNPMYYFLSVLSFLDACYST). The Extracellular segment spans residues 106–129 (VVTPKMLVNFLAKNKSISFIGCAT). The N-linked (GlcNAc...) asparagine glycan is linked to Asn119. Cys127 and Cys219 are joined by a disulfide. A helical membrane pass occupies residues 130–150 (QMLLFVTFGTTECFLLAAMAY). Residues 151-169 (DHYVAIYNPLLYSVSMSPR) lie on the Cytoplasmic side of the membrane. The chain crosses the membrane as a helical span at residues 170-190 (VYVPLITASYVAGILHATIHI). The Extracellular segment spans residues 191–226 (VATFSLSFCGSNEIRHVFCDMPPLLAISCSDTHTNQ). A helical membrane pass occupies residues 227-247 (LLLFYFVGSIEIVTILIVLIS). The Cytoplasmic segment spans residues 248–267 (CDFILLSILKMHSAKGRQKA). Residues 268-288 (FSTCGSHLTGVTIYHGTILVS) form a helical membrane-spanning segment. The Extracellular portion of the chain corresponds to 289–301 (YMRPSSSYASDHD). The chain crosses the membrane as a helical span at residues 302–322 (IIVSIFYTIVIPKLNPIIYSL). At 323 to 340 (RNKEVKKAVKKMLKLVYK) the chain is on the cytoplasmic side.

It belongs to the G-protein coupled receptor 1 family.

Its subcellular location is the cell membrane. In terms of biological role, odorant receptor. The sequence is that of Olfactory receptor 5T3 (OR5T3) from Homo sapiens (Human).